The sequence spans 401 residues: Aspartate aminotransferase, mitochondrial (401 aa).

At Thr-19 the chain carries Phosphothreonine. Lys-30 carries the post-translational modification N6-acetyllysine. Position 36 (Gly-36) interacts with substrate. Lys-44 is modified (N6-acetyllysine; alternate). Position 44 is an N6-succinyllysine; alternate (Lys-44). Lys-53 carries the N6-acetyllysine modification. Residue Lys-61 is modified to N6-acetyllysine; alternate. At Lys-61 the chain carries N6-succinyllysine; alternate. 3'-nitrotyrosine; alternate is present on Tyr-67. Tyr-67 is subject to Phosphotyrosine; alternate. N6-acetyllysine; alternate occurs at positions 78, 93, and 130. Lys-78, Lys-93, and Lys-130 each carry N6-succinyllysine; alternate. A substrate-binding site is contributed by Trp-133. Lys-156 is modified (N6-acetyllysine; alternate). At Lys-156 the chain carries N6-succinyllysine; alternate. Asn-186 is a substrate binding site. An N6-succinyllysine modification is found at Lys-198. The residue at position 205 (Lys-205) is an N6-acetyllysine. N6-acetyllysine; alternate is present on residues Lys-250 and Lys-267. An N6-(pyridoxal phosphate)lysine; alternate modification is found at Lys-250. At Lys-267 the chain carries N6-succinyllysine; alternate. Lys-273 bears the N6-acetyllysine mark. At Lys-280 the chain carries N6-acetyllysine; alternate. Lys-280 is modified (N6-succinyllysine; alternate). Position 284 is an asymmetric dimethylarginine (Arg-284). Lys-309 is modified (N6-acetyllysine; alternate). Lys-309 carries the post-translational modification N6-succinyllysine; alternate. Position 316 is an N6-acetyllysine (Lys-316). N6-acetyllysine; alternate is present on Lys-334. N6-succinyllysine; alternate is present on Lys-334. N6-acetyllysine is present on residues Lys-335 and Lys-358. Lys-367 and Lys-375 each carry N6-acetyllysine; alternate. N6-succinyllysine; alternate occurs at positions 367 and 375. Arg-378 serves as a coordination point for substrate.

This sequence belongs to the class-I pyridoxal-phosphate-dependent aminotransferase family. Homodimer. Requires pyridoxal 5'-phosphate as cofactor.

It is found in the mitochondrion matrix. The protein resides in the cell membrane. It catalyses the reaction L-aspartate + 2-oxoglutarate = oxaloacetate + L-glutamate. It carries out the reaction L-kynurenine + 2-oxoglutarate = kynurenate + L-glutamate + H2O. Its function is as follows. Catalyzes the irreversible transamination of the L-tryptophan metabolite L-kynurenine to form kynurenic acid (KA). As a member of the malate-aspartate shuttle, it has a key role in the intracellular NAD(H) redox balance. Is important for metabolite exchange between mitochondria and cytosol, and for amino acid metabolism. Facilitates cellular uptake of long-chain free fatty acids. This chain is Aspartate aminotransferase, mitochondrial (GOT2), found in Equus caballus (Horse).